Consider the following 173-residue polypeptide: Lens fiber membrane intrinsic protein (173 aa).

The Cytoplasmic segment spans residues 1-3 (MYS). Residues 4-24 (FMGGGLFCAWVGTILLVVATA) form a helical membrane-spanning segment. The Extracellular portion of the chain corresponds to 25–66 (TDHWMQYRLSGAFAHQGLWRYCLGTKCYLQTESIAYWNATRA). Residues Trp-43 and Trp-61 are each glycosylated (C-linked (Man) tryptophan; partial). A helical membrane pass occupies residues 67 to 87 (FMILSSLCATSGIIMGIVAFA). At 88-98 (QQPTFTRLSRP) the chain is on the cytoplasmic side. A helical transmembrane segment spans residues 99–119 (FSAGIMFFASTFFVLLALAIY). Over 120 to 140 (TGVTVSFLGRRFGDWRFSWSY) the chain is Extracellular. A helical membrane pass occupies residues 141-161 (ILGWVALLMTFFAGIFYMCAY). The Cytoplasmic segment spans residues 162–173 (RMHECRRLSTPR). Ser-170 carries the post-translational modification Phosphoserine. Thr-171 is modified (phosphothreonine).

Belongs to the PMP-22/EMP/MP20 family. As to quaternary structure, seems to be associated with itself or another lens membrane component via disulfide bonds. Post-translationally, predominantly monophosphorylated on Ser-170. Only about 15% diphosphorylated on both Ser-170 and Thr-171. In terms of processing, C-glycosylated. Trp-43 is more extensively C-glycosylated than Trp-61. C-glycosylation may be involved in membrane trafficking. In terms of tissue distribution, eye lens specific.

It localises to the membrane. Its function is as follows. Present in the thicker 16-17 nm junctions of mammalian lens fiber cells, where it may contribute to cell junctional organization. Acts as a receptor for calmodulin. May play an important role in both lens development and cataractogenesis. This chain is Lens fiber membrane intrinsic protein (LIM2), found in Bos taurus (Bovine).